A 241-amino-acid chain; its full sequence is Carboxy-S-adenosyl-L-methionine synthase (241 aa).

S-adenosyl-L-methionine is bound by residues Tyr38, 63-65 (GCS), 88-89 (DN), 116-117 (DI), Asn131, and Arg198.

This sequence belongs to the class I-like SAM-binding methyltransferase superfamily. Cx-SAM synthase family. As to quaternary structure, homodimer.

The catalysed reaction is prephenate + S-adenosyl-L-methionine = carboxy-S-adenosyl-L-methionine + 3-phenylpyruvate + H2O. Its function is as follows. Catalyzes the conversion of S-adenosyl-L-methionine (SAM) to carboxy-S-adenosyl-L-methionine (Cx-SAM). This Actinobacillus pleuropneumoniae serotype 3 (strain JL03) protein is Carboxy-S-adenosyl-L-methionine synthase.